The sequence spans 436 residues: uncharacterized protein (436 aa).

12 consecutive transmembrane segments (helical) span residues 38 to 58 (ILIFSQIFGGAGLGAGITVGA), 70 to 90 (VAGIPTALFTFGSAVAALLIG), 102 to 122 (LAGGFLIGGLGAIGVIIAALI), 125 to 145 (VALLFVSLLIYGAGMASNLQV), 160 to 180 (TAASMALVSTTLGAVVGPNLV), 197 to 217 (GPFIMSGAAFIIAGIILLIFL), 254 to 274 (IMVGAVIMILAQLIMTAIMTM), 291 to 311 (LVIGLHIAAMYLPSPLTGLLV), 319 to 339 (MAIASGATLLAAGLVAAIAPA), 342 to 362 (LSLLILALVLLGVGWNFGLLT), 383 to 403 (FDVLLALSGAAGGALSGMVVA), and 409 to 429 (ILSISGAVLSLLLIPVVIWYF).

It belongs to the major facilitator superfamily.

The protein resides in the cell membrane. This is an uncharacterized protein from Bacillus subtilis (strain 168).